The sequence spans 124 residues: Small ribosomal subunit protein bS6 (124 aa).

Belongs to the bacterial ribosomal protein bS6 family.

Functionally, binds together with bS18 to 16S ribosomal RNA. The chain is Small ribosomal subunit protein bS6 from Rippkaea orientalis (strain PCC 8801 / RF-1) (Cyanothece sp. (strain PCC 8801)).